The chain runs to 857 residues: DNA mismatch repair protein MutS (857 aa).

608 to 615 (GPNMSGKS) contributes to the ATP binding site.

The protein belongs to the DNA mismatch repair MutS family.

In terms of biological role, this protein is involved in the repair of mismatches in DNA. It is possible that it carries out the mismatch recognition step. This protein has a weak ATPase activity. This Lactobacillus johnsonii (strain CNCM I-12250 / La1 / NCC 533) protein is DNA mismatch repair protein MutS.